Consider the following 134-residue polypeptide: Large ribosomal subunit protein eL28 (134 aa).

The residue at position 60 (serine 60) is a Phosphoserine.

The protein belongs to the eukaryotic ribosomal protein eL28 family. As to quaternary structure, component of the large ribosomal subunit (LSU). Mature yeast ribosomes consist of a small (40S) and a large (60S) subunit. The 40S small subunit contains 1 molecule of ribosomal RNA (18S rRNA) and at least 33 different proteins. The large 60S subunit contains 3 rRNA molecules (25S, 5.8S and 5S rRNA) and at least 46 different proteins.

The protein localises to the cytoplasm. Component of the ribosome, a large ribonucleoprotein complex responsible for the synthesis of proteins in the cell. The small ribosomal subunit (SSU) binds messenger RNAs (mRNAs) and translates the encoded message by selecting cognate aminoacyl-transfer RNA (tRNA) molecules. The large subunit (LSU) contains the ribosomal catalytic site termed the peptidyl transferase center (PTC), which catalyzes the formation of peptide bonds, thereby polymerizing the amino acids delivered by tRNAs into a polypeptide chain. The nascent polypeptides leave the ribosome through a tunnel in the LSU and interact with protein factors that function in enzymatic processing, targeting, and the membrane insertion of nascent chains at the exit of the ribosomal tunnel. The sequence is that of Large ribosomal subunit protein eL28 (rpl44) from Schizosaccharomyces pombe (strain 972 / ATCC 24843) (Fission yeast).